The following is a 98-amino-acid chain: Large ribosomal subunit protein uL23 (98 aa).

Belongs to the universal ribosomal protein uL23 family. In terms of assembly, part of the 50S ribosomal subunit. Contacts protein L29, and trigger factor when it is bound to the ribosome.

Functionally, one of the early assembly proteins it binds 23S rRNA. One of the proteins that surrounds the polypeptide exit tunnel on the outside of the ribosome. Forms the main docking site for trigger factor binding to the ribosome. This Borreliella afzelii (strain PKo) (Borrelia afzelii) protein is Large ribosomal subunit protein uL23.